A 641-amino-acid chain; its full sequence is 1-deoxy-D-xylulose-5-phosphate synthase (641 aa).

Residues H79 and 120–122 (GHS) contribute to the thiamine diphosphate site. Mg(2+) is bound at residue D151. Residues 152–153 (GS), N180, Y291, and E375 each bind thiamine diphosphate. Residue N180 participates in Mg(2+) binding.

It belongs to the transketolase family. DXPS subfamily. In terms of assembly, homodimer. The cofactor is Mg(2+). It depends on thiamine diphosphate as a cofactor.

It carries out the reaction D-glyceraldehyde 3-phosphate + pyruvate + H(+) = 1-deoxy-D-xylulose 5-phosphate + CO2. The protein operates within metabolic intermediate biosynthesis; 1-deoxy-D-xylulose 5-phosphate biosynthesis; 1-deoxy-D-xylulose 5-phosphate from D-glyceraldehyde 3-phosphate and pyruvate: step 1/1. In terms of biological role, catalyzes the acyloin condensation reaction between C atoms 2 and 3 of pyruvate and glyceraldehyde 3-phosphate to yield 1-deoxy-D-xylulose-5-phosphate (DXP). The sequence is that of 1-deoxy-D-xylulose-5-phosphate synthase from Nitratidesulfovibrio vulgaris (strain ATCC 29579 / DSM 644 / CCUG 34227 / NCIMB 8303 / VKM B-1760 / Hildenborough) (Desulfovibrio vulgaris).